The sequence spans 255 residues: Probable transcriptional regulatory protein PCC8801_2028 (255 aa).

This sequence belongs to the TACO1 family.

It is found in the cytoplasm. The protein is Probable transcriptional regulatory protein PCC8801_2028 of Rippkaea orientalis (strain PCC 8801 / RF-1) (Cyanothece sp. (strain PCC 8801)).